We begin with the raw amino-acid sequence, 97 residues long: Aspartyl/glutamyl-tRNA(Asn/Gln) amidotransferase subunit C (97 aa).

The interval 58 to 78 (LPQGRLRKDTPRDPLDRENAL) is disordered. Over residues 63-77 (LRKDTPRDPLDRENA) the composition is skewed to basic and acidic residues.

The protein belongs to the GatC family. As to quaternary structure, heterotrimer of A, B and C subunits.

The enzyme catalyses L-glutamyl-tRNA(Gln) + L-glutamine + ATP + H2O = L-glutaminyl-tRNA(Gln) + L-glutamate + ADP + phosphate + H(+). The catalysed reaction is L-aspartyl-tRNA(Asn) + L-glutamine + ATP + H2O = L-asparaginyl-tRNA(Asn) + L-glutamate + ADP + phosphate + 2 H(+). Functionally, allows the formation of correctly charged Asn-tRNA(Asn) or Gln-tRNA(Gln) through the transamidation of misacylated Asp-tRNA(Asn) or Glu-tRNA(Gln) in organisms which lack either or both of asparaginyl-tRNA or glutaminyl-tRNA synthetases. The reaction takes place in the presence of glutamine and ATP through an activated phospho-Asp-tRNA(Asn) or phospho-Glu-tRNA(Gln). The polypeptide is Aspartyl/glutamyl-tRNA(Asn/Gln) amidotransferase subunit C (Saccharolobus islandicus (strain Y.N.15.51 / Yellowstone #2) (Sulfolobus islandicus)).